The chain runs to 1123 residues: Phytochrome A (1123 aa).

Residues 1-14 (MSSSRPSQSSTTSS) show a composition bias toward low complexity. Residues 1–20 (MSSSRPSQSSTTSSRSKHSA) are disordered. One can recognise a GAF domain in the interval 218 to 401 (SMERLCDTMV…VFAILVNKEL (184 aa)). A phytochromobilin-binding site is contributed by C323. The 71-residue stretch at 617–687 (VTAEMVRLIE…KMLELALQGQ (71 aa)) folds into the PAS 1 domain. Residues 690–746 (RNVEFEIKTHGPSRDSSPISLIVNACASKDVRDSVVGVCFIAQDITGQKSIMDKFTR) form the PAC domain. Residues 747-821 (IEGDYRAIIQ…KNQEAFVNFG (75 aa)) enclose the PAS 2 domain. A Histidine kinase domain is found at 901 to 1118 (YIRRQIRNPL…TFIISVELAV (218 aa)).

The protein belongs to the phytochrome family. In terms of assembly, homodimer. Contains one covalently linked phytochromobilin chromophore.

Functionally, regulatory photoreceptor which exists in two forms that are reversibly interconvertible by light: the Pr form that absorbs maximally in the red region of the spectrum and the Pfr form that absorbs maximally in the far-red region. Photoconversion of Pr to Pfr induces an array of morphogenic responses, whereas reconversion of Pfr to Pr cancels the induction of those responses. Pfr controls the expression of a number of nuclear genes including those encoding the small subunit of ribulose-bisphosphate carboxylase, chlorophyll A/B binding protein, protochlorophyllide reductase, rRNA, etc. It also controls the expression of its own gene(s) in a negative feedback fashion. The sequence is that of Phytochrome A (PHYA) from Solanum tuberosum (Potato).